The primary structure comprises 317 residues: Retinol dehydrogenase 16 (317 aa).

Residue 33–57 (FITGCDSGFGNLLARQLDRRGMRVL) coordinates NAD(+). A substrate-binding site is contributed by S164. Y176 functions as the Proton acceptor in the catalytic mechanism. The helical transmembrane segment at 289-308 (FFYLPMSYLPTFLVDALFYW) threads the bilayer.

It belongs to the short-chain dehydrogenases/reductases (SDR) family. In terms of assembly, homodimer. In terms of processing, not N-glycosylated. In terms of tissue distribution, liver &gt; kidney &gt; brain &gt; lung &gt; testis.

The protein localises to the microsome membrane. The protein resides in the endoplasmic reticulum membrane. The catalysed reaction is all-trans-retinol--[retinol-binding protein] + NAD(+) = all-trans-retinal--[retinol-binding protein] + NADH + H(+). It catalyses the reaction all-trans-retinol + NAD(+) = all-trans-retinal + NADH + H(+). It carries out the reaction 13-cis-retinol + NAD(+) = 13-cis-retinal + NADH + H(+). The enzyme catalyses 11-cis-retinol + NAD(+) = 11-cis-retinal + NADH + H(+). The catalysed reaction is 9-cis-retinol + NAD(+) = 9-cis-retinal + NADH + H(+). It catalyses the reaction 5alpha-androstane-3alpha,17beta-diol + NAD(+) = 17beta-hydroxy-5alpha-androstan-3-one + NADH + H(+). It carries out the reaction androsterone + NAD(+) = 5alpha-androstan-3,17-dione + NADH + H(+). It functions in the pathway cofactor metabolism; retinol metabolism. Functionally, oxidoreductase with a preference for NAD. Oxidizes all-trans-retinol, 9-cis-retinol, 11-cis-retinol and 13-cis-retinol to the corresponding aldehydes. Has higher activity towards CRBP-bound retinol than with free retinol. Oxidizes 3-alpha-hydroxysteroids. Oxidizes androstanediol and androsterone to dihydrotestosterone and androstanedione. Can also catalyze the reverse reaction. The polypeptide is Retinol dehydrogenase 16 (Rattus norvegicus (Rat)).